Reading from the N-terminus, the 255-residue chain is 5-oxoprolinase subunit A (255 aa).

The protein belongs to the LamB/PxpA family. In terms of assembly, forms a complex composed of PxpA, PxpB and PxpC.

It catalyses the reaction 5-oxo-L-proline + ATP + 2 H2O = L-glutamate + ADP + phosphate + H(+). In terms of biological role, catalyzes the cleavage of 5-oxoproline to form L-glutamate coupled to the hydrolysis of ATP to ADP and inorganic phosphate. This chain is 5-oxoprolinase subunit A, found in Thermococcus sibiricus (strain DSM 12597 / MM 739).